A 331-amino-acid polypeptide reads, in one-letter code: Glyceraldehyde-3-phosphate dehydrogenase (331 aa).

NAD(+)-binding positions include 12–13 (RI), Asp-34, Arg-78, and Thr-120. 2 positions are modified to N6-acetyllysine: Lys-132 and Lys-138. D-glyceraldehyde 3-phosphate-binding positions include 149–151 (SCT) and Thr-180. The active-site Nucleophile is the Cys-150. Lys-192 carries the N6-acetyllysine modification. D-glyceraldehyde 3-phosphate contacts are provided by residues 209–210 (TG) and Arg-232. Position 249 is an N6-acetyllysine (Lys-249). Asn-314 contacts NAD(+).

The protein belongs to the glyceraldehyde-3-phosphate dehydrogenase family. In terms of assembly, homotetramer.

The protein localises to the cytoplasm. The enzyme catalyses D-glyceraldehyde 3-phosphate + phosphate + NAD(+) = (2R)-3-phospho-glyceroyl phosphate + NADH + H(+). It participates in carbohydrate degradation; glycolysis; pyruvate from D-glyceraldehyde 3-phosphate: step 1/5. Its function is as follows. Catalyzes the oxidative phosphorylation of glyceraldehyde 3-phosphate (G3P) to 1,3-bisphosphoglycerate (BPG) using the cofactor NAD. The first reaction step involves the formation of a hemiacetal intermediate between G3P and a cysteine residue, and this hemiacetal intermediate is then oxidized to a thioester, with concomitant reduction of NAD to NADH. The reduced NADH is then exchanged with the second NAD, and the thioester is attacked by a nucleophilic inorganic phosphate to produce BPG. This is Glyceraldehyde-3-phosphate dehydrogenase (gapA) from Escherichia coli O6:H1 (strain CFT073 / ATCC 700928 / UPEC).